We begin with the raw amino-acid sequence, 252 residues long: Delta-like protein dsl-1 (252 aa).

The N-terminal stretch at 1-17 (MLKYLIFLAILISVVHS) is a signal peptide. One can recognise a DSL domain in the interval 120–164 (IKCNRYWHGLHCDHFCNDDFARTINRRCTQNGTLGCLEGFHGPNC). 6 disulfides stabilise this stretch: cysteine 122/cysteine 131, cysteine 135/cysteine 147, cysteine 155/cysteine 164, cysteine 173/cysteine 181, cysteine 175/cysteine 197, and cysteine 199/cysteine 209. The region spanning 169–210 (PADSCKCQNGGKCVSSLENTWAQNGSLICECRLGHFEGKHCE) is the EGF-like domain.

As to quaternary structure, may interact with lin-12/Notch receptor.

The protein resides in the secreted. Probable secreted Notch ligand involved in the mediation of Notch signaling. Involved in the lin-12/Notch pathway-mediated signaling of cell fate in vulval precursor cells (VPCs), acting redundantly with lag-2, apx-1 and osm-11. May also be involved in glp-1/Notch signaling. The chain is Delta-like protein dsl-1 from Caenorhabditis elegans.